Consider the following 263-residue polypeptide: 4-hydroxy-2-oxo-heptane-1,7-dioate aldolase (263 aa).

His45 acts as the Proton acceptor in catalysis. Residue Gln147 participates in substrate binding. An a divalent metal cation-binding site is contributed by Glu149. Substrate is bound by residues Ala174 and Asp175. Asp175 provides a ligand contact to a divalent metal cation.

The protein belongs to the HpcH/HpaI aldolase family. As to quaternary structure, homohexamer; trimer of dimers. A divalent metal cation is required as a cofactor.

The catalysed reaction is 4-hydroxy-2-oxoheptanedioate = succinate semialdehyde + pyruvate. Its pathway is aromatic compound metabolism; 4-hydroxyphenylacetate degradation; pyruvate and succinate semialdehyde from 4-hydroxyphenylacetate: step 7/7. Its function is as follows. Catalyzes the reversible retro-aldol cleavage of 4-hydroxy-2-ketoheptane-1,7-dioate (HKHD) to pyruvate and succinic semialdehyde. This chain is 4-hydroxy-2-oxo-heptane-1,7-dioate aldolase, found in Salmonella heidelberg (strain SL476).